Reading from the N-terminus, the 155-residue chain is Endoribonuclease YbeY (155 aa).

3 residues coordinate Zn(2+): His-110, His-114, and His-120.

This sequence belongs to the endoribonuclease YbeY family. The cofactor is Zn(2+).

Its subcellular location is the cytoplasm. In terms of biological role, single strand-specific metallo-endoribonuclease involved in late-stage 70S ribosome quality control and in maturation of the 3' terminus of the 16S rRNA. The sequence is that of Endoribonuclease YbeY from Deinococcus geothermalis (strain DSM 11300 / CIP 105573 / AG-3a).